A 307-amino-acid polypeptide reads, in one-letter code: Ribonuclease Z (307 aa).

The Zn(2+) site is built by His-63, His-65, Asp-67, His-68, His-141, Asp-212, and His-270. The active-site Proton acceptor is the Asp-67.

It belongs to the RNase Z family. In terms of assembly, homodimer. Zn(2+) is required as a cofactor.

The enzyme catalyses Endonucleolytic cleavage of RNA, removing extra 3' nucleotides from tRNA precursor, generating 3' termini of tRNAs. A 3'-hydroxy group is left at the tRNA terminus and a 5'-phosphoryl group is left at the trailer molecule.. In terms of biological role, zinc phosphodiesterase, which displays some tRNA 3'-processing endonuclease activity. Probably involved in tRNA maturation, by removing a 3'-trailer from precursor tRNA. The chain is Ribonuclease Z from Bacillus thuringiensis subsp. konkukian (strain 97-27).